We begin with the raw amino-acid sequence, 733 residues long: 1,4-alpha-glucan branching enzyme GlgB (733 aa).

The Nucleophile role is filled by aspartate 413. Glutamate 466 serves as the catalytic Proton donor.

The protein belongs to the glycosyl hydrolase 13 family. GlgB subfamily. Monomer.

The enzyme catalyses Transfers a segment of a (1-&gt;4)-alpha-D-glucan chain to a primary hydroxy group in a similar glucan chain.. The protein operates within glycan biosynthesis; glycogen biosynthesis. Its function is as follows. Catalyzes the formation of the alpha-1,6-glucosidic linkages in glycogen by scission of a 1,4-alpha-linked oligosaccharide from growing alpha-1,4-glucan chains and the subsequent attachment of the oligosaccharide to the alpha-1,6 position. This is 1,4-alpha-glucan branching enzyme GlgB from Leifsonia xyli subsp. xyli (strain CTCB07).